We begin with the raw amino-acid sequence, 139 residues long: METDYNPVELSSMSGFEEGSELNGFEGADMKDMQLEAEAVVNDVLFAVNHMFVSKSMPCADDVAYINVETKERNRYCLELTEAGLRVVGYAFDQVEDHLQTPYHETVYSLLDTLSPAYREAFGNALLQRLEALKRDGQS.

Positions 41 to 45 (VNDVL) are required for PRKAR2A interaction; contributes to a protective effect against H(2)O(2)-induced apoptosis. The segment at 115 to 139 (SPAYREAFGNALLQRLEALKRDGQS) is interaction with GSK3B and acts as a GSK3B inhibitor.

It belongs to the GSKIP family. In terms of assembly, forms a complex composed of PRKAR2A or PRKAR2B, GSK3B and GSKIP through GSKIP interaction; facilitates PKA-induced phosphorylation of GSK3B leading to GSK3B inactivation; recruits DNM1L through GSK3B for PKA-mediated phosphorylation of DNM1L; promotes beta-catenin degradation through GSK3B-induced phosphorylation of beta-catenin; stabilizes beta-catenin and enhances Wnt-induced signaling through PKA-induced phosphorylation of beta-catenin. Interacts with GSK3B; induces GSK3B-mediated phosphorylation of GSKIP and inhibits GSK3B kinase activity. In terms of processing, phosphorylated by GSK3B.

The protein localises to the cytoplasm. The protein resides in the nucleus. Its function is as follows. A-kinase anchoring protein for GSK3B and PKA that regulates or facilitates their kinase activity towards their targets. The ternary complex enhances Wnt-induced signaling by facilitating the GSK3B- and PKA-induced phosphorylation of beta-catenin leading to beta-catenin degradation and stabilization respectively. Upon cAMP activation, the ternary complex contributes to neuroprotection against oxidative stress-induced apoptosis by facilitating the PKA-induced phosphorylation of DML1 and PKA-induced inactivation of GSK3B. During neurite outgrowth promotes neuron proliferation; while increases beta-catenin-induced transcriptional activity through GSK3B kinase activity inhibition, reduces N-cadherin level to promote cell cycle progression. May play a role in cleft palate formation and is required for postnatal life through modulation of the activity of GSK3B during development. In Mus musculus (Mouse), this protein is GSK3B-interacting protein.